Here is a 189-residue protein sequence, read N- to C-terminus: MKGKGRNRAVKSLEIYVRKLAQANGIKPEMAAHIFHLIYEETPNGGISDDDLESLTGYKQSDIRRILRLLGDKRIIVSRKGRHPRKEATRYFWRIDSDTINVSLLTLKKKVLEKLVVKEAHDSGNSYYTCPRCGSKYSFDEAFTLDFTCPRCGEVLEEADSREGLERLRRTIDALREEIARDESRIYRS.

The HTH TFE/IIEalpha-type domain occupies 9-101 (AVKSLEIYVR…FWRIDSDTIN (93 aa)).

This sequence belongs to the TFE family. In terms of assembly, monomer. Interaction with RNA polymerase subunits RpoF and RpoE is necessary for Tfe stimulatory transcription activity. Able to interact with Tbp and RNA polymerase in the absence of DNA promoter. Interacts both with the preinitiation and elongation complexes.

In terms of biological role, transcription factor that plays a role in the activation of archaeal genes transcribed by RNA polymerase. Facilitates transcription initiation by enhancing TATA-box recognition by TATA-box-binding protein (Tbp), and transcription factor B (Tfb) and RNA polymerase recruitment. Not absolutely required for transcription in vitro, but particularly important in cases where Tbp or Tfb function is not optimal. It dynamically alters the nucleic acid-binding properties of RNA polymerases by stabilizing the initiation complex and destabilizing elongation complexes. Seems to translocate with the RNA polymerase following initiation and acts by binding to the non template strand of the transcription bubble in elongation complexes. The sequence is that of Transcription factor E from Aeropyrum pernix (strain ATCC 700893 / DSM 11879 / JCM 9820 / NBRC 100138 / K1).